A 364-amino-acid chain; its full sequence is Histidinol-phosphate aminotransferase (364 aa).

The residue at position 226 (Lys-226) is an N6-(pyridoxal phosphate)lysine.

This sequence belongs to the class-II pyridoxal-phosphate-dependent aminotransferase family. Histidinol-phosphate aminotransferase subfamily. Homodimer. The cofactor is pyridoxal 5'-phosphate.

The catalysed reaction is L-histidinol phosphate + 2-oxoglutarate = 3-(imidazol-4-yl)-2-oxopropyl phosphate + L-glutamate. It participates in amino-acid biosynthesis; L-histidine biosynthesis; L-histidine from 5-phospho-alpha-D-ribose 1-diphosphate: step 7/9. The polypeptide is Histidinol-phosphate aminotransferase (Campylobacter jejuni subsp. doylei (strain ATCC BAA-1458 / RM4099 / 269.97)).